The primary structure comprises 1001 residues: Protein MEI2-like 4 (1001 aa).

Positions 100–120 (HANLPPSPWRPDQETGRQTDS) are disordered. 2 consecutive RRM domains span residues 275–348 (RTLF…YSIP) and 360–433 (GTIV…TSRL). 2 disordered regions span residues 767–815 (GGPS…KKQY) and 941–1001 (FHSD…PAKD). The segment covering 793–803 (PGERMRSRRND) has biased composition (basic and acidic residues). Residues 978-994 (DISITSVNCDTSTNGVD) show a composition bias toward polar residues.

Functionally, probable RNA-binding protein that may play a role in growth regulation. This is Protein MEI2-like 4 (ML4) from Oryza sativa subsp. japonica (Rice).